The primary structure comprises 68 residues: Purkinje cell protein 4-like protein 1 (68 aa).

The span at Met1–Ala16 shows a compositional bias: polar residues. A disordered region spans residues Met1–Thr45. Thr8 carries the post-translational modification Phosphothreonine. A compositionally biased stretch (basic and acidic residues) spans Gln18–Glu31. In terms of domain architecture, IQ spans Thr45 to Ser68.

This sequence belongs to the PCP4 family.

This Homo sapiens (Human) protein is Purkinje cell protein 4-like protein 1 (PCP4L1).